The following is a 463-amino-acid chain: Hexose-6-phosphate:phosphate antiporter (463 aa).

Over 1–24 (MLAFLNQVRKPTLDLPLEVRRKMW) the chain is Cytoplasmic. A helical membrane pass occupies residues 25–45 (FKPFMQSYLVVFIGYLTMYLI). Topologically, residues 46–60 (RKNFNIAQNDMISTY) are periplasmic. The helical transmembrane segment at 61-81 (GLSMTQLGMIGLGFSITYGVG) threads the bilayer. Residues 82-96 (KTLVSYYADGKNTKQ) lie on the Cytoplasmic side of the membrane. The chain crosses the membrane as a helical span at residues 97-117 (FLPFMLILSAICMLGFSASMG). Over 118–120 (SGS) the chain is Periplasmic. Residues 121–141 (VSLFLMIAFYALSGFFQSTGG) form a helical membrane-spanning segment. Topologically, residues 142–159 (SCSYSTITKWTPRRKRGT) are cytoplasmic. A helical membrane pass occupies residues 160-180 (FLGFWNISHNLGGAGAAGVAL). At 181 to 189 (FGANYLFDG) the chain is on the periplasmic side. Residues 190–210 (HVIGMFIFPSIIALIVGFIGL) form a helical membrane-spanning segment. At 211–259 (RYGSDSPESYGLGKAEELFGEEISEEDKETESTDMTKWQIFVEYVLKNK) the chain is on the cytoplasmic side. A helical membrane pass occupies residues 260–280 (VIWLLCFANIFLYVVRIGIDQ). Over 281–297 (WSTVYAFQELKLSKAVA) the chain is Periplasmic. A helical transmembrane segment spans residues 298–318 (IQGFTLFEAGALVGTLLWGWL). Residues 319 to 326 (SDLANGRR) are Cytoplasmic-facing. The helical transmembrane segment at 327 to 347 (GLVACIALALIIATLGVYQHA) threads the bilayer. Residues 348–357 (SNEYIYLASL) lie on the Periplasmic side of the membrane. Residues 358–378 (FALGFLVFGPQLLIGVAAVGF) form a helical membrane-spanning segment. Topologically, residues 379–382 (VPKK) are cytoplasmic. Residues 383-403 (AIGAADGIKGTFAYLIGDSFA) form a helical membrane-spanning segment. The Periplasmic portion of the chain corresponds to 404–425 (KLGLGMIADGTPVFGLTGWAGT). A helical membrane pass occupies residues 426 to 446 (FAALDIAAIGCICLMAIVAVM). Topologically, residues 447–463 (EERKIRREKKIQQLTVA) are cytoplasmic.

Belongs to the major facilitator superfamily. Organophosphate:Pi antiporter (OPA) (TC 2.A.1.4) family.

It localises to the cell inner membrane. In terms of biological role, mediates the exchange of external hexose 6-phosphate and internal inorganic phosphate. The chain is Hexose-6-phosphate:phosphate antiporter (uhpT) from Escherichia coli O157:H7.